A 347-amino-acid polypeptide reads, in one-letter code: MDDNSIQQSLLADNPNVLQRKPSEGVNRFRRCRSTPSTDPLQGPPEKGSSVKAKELFKEMRPSFRLVGLLLFIYLLVGVLAFYAVMDEISGKRTNRVLDALYFCVVTMTTVGYGDLVPNNDTTKLLACAFVFMGMAVVALFVSKVADYLVEKQEVLFFKALHTNLKGGETKMLRAIETNRIKYKFYTNALLLVLSIISGTVFLWKVEKLSLVDSFYCVCATITTLGYGDKSFSSKLGRVFAVFWIITSTIIMAQFFMYLAEIYTERRQKMLANWVLTRKMTKMDLEAADLDDDRQVGAAEFVVYKLKELGKINQEEISSFLEEFEKLDVDHSGTLSPYDLTLAQSAQ.

The segment covering 1–11 (MDDNSIQQSLL) has biased composition (polar residues). Positions 1–49 (MDDNSIQQSLLADNPNVLQRKPSEGVNRFRRCRSTPSTDPLQGPPEKGS) are disordered. At 1–65 (MDDNSIQQSL…LFKEMRPSFR (65 aa)) the chain is on the cytoplasmic side. The helical transmembrane segment at 66 to 86 (LVGLLLFIYLLVGVLAFYAVM) threads the bilayer. The segment at residues 99–118 (DALYFCVVTMTTVGYGDLVP) is an intramembrane region (pore-forming). A helical membrane pass occupies residues 125–145 (LLACAFVFMGMAVVALFVSKV). Residues 146 to 183 (ADYLVEKQEVLFFKALHTNLKGGETKMLRAIETNRIKY) lie on the Cytoplasmic side of the membrane. The helical transmembrane segment at 184–204 (KFYTNALLLVLSIISGTVFLW) threads the bilayer. An intramembrane region (pore-forming) is located at residues 213-232 (DSFYCVCATITTLGYGDKSF). The chain crosses the membrane as a helical span at residues 239–259 (VFAVFWIITSTIIMAQFFMYL). The Cytoplasmic segment spans residues 260 to 347 (AEIYTERRQK…YDLTLAQSAQ (88 aa)). EF-hand domains lie at 276-311 (LTRK…ELGK) and 315-347 (EEIS…QSAQ). Positions 289, 291, 293, 295, 300, 328, 330, 332, 334, and 339 each coordinate Ca(2+).

Belongs to the two pore domain potassium channel (TC 1.A.1.7) family. Homodimer.

It localises to the vacuole membrane. Its function is as follows. Highly selective inward-rectifying potassium channel that is specifically located in the tonoplast of large vacuoles. Functions independently of the voltage difference across the membrane. The chain is Two pore potassium channel a (TPKA) from Oryza sativa subsp. japonica (Rice).